A 422-amino-acid chain; its full sequence is L-2-hydroxyglutarate dehydrogenase (422 aa).

It belongs to the L2HGDH family. FAD is required as a cofactor.

The protein resides in the cell inner membrane. The enzyme catalyses (S)-2-hydroxyglutarate + a quinone = a quinol + 2-oxoglutarate. It participates in amino-acid degradation. Functionally, catalyzes the dehydrogenation of L-2-hydroxyglutarate (L2HG) to alpha-ketoglutarate and couples to the respiratory chain by feeding electrons from the reaction into the membrane quinone pool. Functions in a L-lysine degradation pathway that proceeds via cadaverine, glutarate and L-2-hydroxyglutarate. Also displays some oxidase activity in vitro on L-2-hydroxyglutarate with O2 as the electron acceptor, but this activity is most likely not physiological. In Salmonella houtenae, this protein is L-2-hydroxyglutarate dehydrogenase.